Consider the following 72-residue polypeptide: Heat-stable enterotoxin A2 (72 aa).

The N-terminal stretch at 1-19 (MKKSILFIFLSVLSFSPFA) is a signal peptide. Positions 20 to 53 (QDAKPAGSSKEKITLESKKCNIVKKNNESSPESM) are excised as a propeptide. Intrachain disulfides connect Cys-59-Cys-64, Cys-60-Cys-68, and Cys-63-Cys-71.

Belongs to the heat-stable enterotoxin family.

It is found in the secreted. Its function is as follows. Toxin which activates the particulate form of guanylate cyclase and increases cyclic GMP levels within the host intestinal epithelial cells. The polypeptide is Heat-stable enterotoxin A2 (sta2) (Escherichia coli).